Consider the following 443-residue polypeptide: 23S rRNA (uracil(1939)-C(5))-methyltransferase RlmD (443 aa).

The TRAM domain maps to 4 to 66 (QNRFDRTSFQ…RHFDEARVVE (63 aa)). 4 residues coordinate [4Fe-4S] cluster: Cys-79, Cys-85, Cys-88, and Cys-167. S-adenosyl-L-methionine-binding residues include Gln-275, Phe-304, Asn-309, Glu-325, Asp-352, and Asp-373. Cys-399 acts as the Nucleophile in catalysis.

Belongs to the class I-like SAM-binding methyltransferase superfamily. RNA M5U methyltransferase family. RlmD subfamily.

It catalyses the reaction uridine(1939) in 23S rRNA + S-adenosyl-L-methionine = 5-methyluridine(1939) in 23S rRNA + S-adenosyl-L-homocysteine + H(+). In terms of biological role, catalyzes the formation of 5-methyl-uridine at position 1939 (m5U1939) in 23S rRNA. The protein is 23S rRNA (uracil(1939)-C(5))-methyltransferase RlmD of Xylella fastidiosa (strain Temecula1 / ATCC 700964).